We begin with the raw amino-acid sequence, 398 residues long: MLTKSVTSILQGITLAAKEFENNEAGARESLIAHSRALISALEVPSEFIQHTFWSQPALSAIIRLAADVNMFQHLKDAAGKGIDCEALSMKTGVDASLLSRLARHLVAMNVITFQNGAFHGTDLSDSLAAENYQHSIRFCHDVSRPSFNEFPEFFKSNGYKTPTLSGTDGPFQAAHKTELTFLQWLVNTHPYLQYFHSYMSVYRAGKQNWCDTGFYPVSERLLSGFDASVSDVVLVDVGGGRGHDLETFASKFSPLPGRLVLQDREQTIASMPADESRQFEATAHNIFTPQPVKYARAYYMHSVPHGFGDEDAIKIMANLVPALAKGYSRVLLNEIVVSEENPILAATNMDMIMLAHLAVKERTEAEWRYIFTQAGLKVVNIYSYPGVAESLIEAELA.

Asp264 serves as a coordination point for S-adenosyl-L-methionine. His306 functions as the Proton acceptor in the catalytic mechanism. Residues Glu335 and Glu362 contribute to the active site.

The protein belongs to the class I-like SAM-binding methyltransferase superfamily. Cation-independent O-methyltransferase family. COMT subfamily.

It is found in the cytoplasm. The protein resides in the cytosol. It catalyses the reaction (4E,8E)-10-(4,6-dihydroxy-7-methyl-3-oxo-1,3-dihydro-2-benzofuran-5-yl)-4,8-dimethyldeca-4,8-dienoate + S-adenosyl-L-methionine = (4E,8E)-10-(4-hydroxy-6-methoxy-7-methyl-3-oxo-1,3-dihydro-2-benzofuran-5-yl)-4,8-dimethyldeca-4,8-dienoate + S-adenosyl-L-homocysteine + H(+). Its pathway is secondary metabolite biosynthesis; terpenoid biosynthesis. Functionally, O-methyltransferase; part of the gene cluster that mediates the biosynthesis of mycophenolic acid (MPA), the first isolated antibiotic natural product in the world obtained from a culture of Penicillium brevicompactum in 1893. MpaC methylates farnesyl-DHMP-3C (FDHMP-3C) to yield MFDHMP-3C. The first step of the pathway is the synthesis of 5-methylorsellinic acid (5MOA) by the cytosolic polyketide synthase mpaC. 5MOA is then converted to the phthalide compound 5,7-dihydroxy-4,6-dimethylphthalide (DHMP) by the endoplasmic reticulum-bound cytochrome P450 monooxygenase mpaDE. MpaDE first catalyzes hydroxylation of 5-MOA to 4,6-dihydroxy-2-(hydroxymethyl)-3-methylbenzoic acid (DHMB). MpaDE then acts as a lactone synthase that catalyzes the ring closure to convert DHMB into DHMP. The next step is the prenylation of DHMP by the Golgi apparatus-associated prenyltransferase mpaA to yield farnesyl-DHMP (FDHMP). The ER-bound oxygenase mpaB then mediates the oxidative cleavage the C19-C20 double bond in FDHMP to yield FDHMP-3C via a mycophenolic aldehyde intermediate. The O-methyltransferase mpaG catalyzes the methylation of FDHMP-3C to yield MFDHMP-3C. After the cytosolic methylation of FDHMP-3C, MFDHMP-3C enters into peroxisomes probably via free diffusion due to its low molecular weight. Upon a peroxisomal CoA ligation reaction, catalyzed by a beta-oxidation component enzyme acyl-CoA ligase ACL891, MFDHMP-3C-CoA would then be restricted to peroxisomes for the following beta-oxidation pathway steps. The peroxisomal beta-oxidation machinery than converts MFDHMP-3C-CoA into MPA_CoA, via a beta-oxidation chain-shortening process. Finally mpaH acts as a peroxisomal acyl-CoA hydrolase with high substrate specificity toward MPA-CoA to release the final product MPA. This Penicillium roqueforti (strain FM164) protein is O-methyltransferase mpaG.